Reading from the N-terminus, the 75-residue chain is MAPEVLPKPQMRGLLAKRLRFHMVTAFVLSLGVAALYKFRVADKRKKAYADFYRNYDAMKDFEEMRKAGIFQSVK.

Residues 1–13 (MAPEVLPKPQMRG) lie on the Mitochondrial matrix side of the membrane. Residues 14–54 (LLAKRLRFHMVTAFVLSLGVAALYKFRVADKRKKAYADFYR) traverse the membrane as a helical segment. Topologically, residues 55 to 75 (NYDAMKDFEEMRKAGIFQSVK) are mitochondrial intermembrane.

It belongs to the cytochrome c oxidase subunit 6c family. In terms of assembly, component of the cytochrome c oxidase (complex IV, CIV), a multisubunit enzyme composed of 14 subunits. The complex is composed of a catalytic core of 3 subunits MT-CO1, MT-CO2 and MT-CO3, encoded in the mitochondrial DNA, and 11 supernumerary subunits COX4I, COX5A, COX5B, COX6A, COX6B, COX6C, COX7A, COX7B, COX7C, COX8 and NDUFA4, which are encoded in the nuclear genome. The complex exists as a monomer or a dimer and forms supercomplexes (SCs) in the inner mitochondrial membrane with NADH-ubiquinone oxidoreductase (complex I, CI) and ubiquinol-cytochrome c oxidoreductase (cytochrome b-c1 complex, complex III, CIII), resulting in different assemblies (supercomplex SCI(1)III(2)IV(1) and megacomplex MCI(2)III(2)IV(2)).

Its subcellular location is the mitochondrion inner membrane. It functions in the pathway energy metabolism; oxidative phosphorylation. In terms of biological role, component of the cytochrome c oxidase, the last enzyme in the mitochondrial electron transport chain which drives oxidative phosphorylation. The respiratory chain contains 3 multisubunit complexes succinate dehydrogenase (complex II, CII), ubiquinol-cytochrome c oxidoreductase (cytochrome b-c1 complex, complex III, CIII) and cytochrome c oxidase (complex IV, CIV), that cooperate to transfer electrons derived from NADH and succinate to molecular oxygen, creating an electrochemical gradient over the inner membrane that drives transmembrane transport and the ATP synthase. Cytochrome c oxidase is the component of the respiratory chain that catalyzes the reduction of oxygen to water. Electrons originating from reduced cytochrome c in the intermembrane space (IMS) are transferred via the dinuclear copper A center (CU(A)) of subunit 2 and heme A of subunit 1 to the active site in subunit 1, a binuclear center (BNC) formed by heme A3 and copper B (CU(B)). The BNC reduces molecular oxygen to 2 water molecules using 4 electrons from cytochrome c in the IMS and 4 protons from the mitochondrial matrix. The chain is Cytochrome c oxidase subunit 6C (COX6C) from Trachypithecus cristatus (Silvered leaf-monkey).